The chain runs to 74 residues: ATP synthase subunit 9, mitochondrial (74 aa).

2 helical membrane-spanning segments follow: residues 8-28 (IGAG…GNVF) and 45-72 (LFGY…LILF).

This sequence belongs to the ATPase C chain family. As to quaternary structure, F-type ATPases have 2 components, CF(1) - the catalytic core - and CF(0) - the membrane proton channel. CF(1) has five subunits: alpha(3), beta(3), gamma(1), delta(1), epsilon(1). CF(0) has three main subunits: a, b and c.

The protein resides in the mitochondrion membrane. Functionally, this protein is one of the chains of the nonenzymatic membrane component (F0) of mitochondrial ATPase. This Pisum sativum (Garden pea) protein is ATP synthase subunit 9, mitochondrial (ATP9).